The primary structure comprises 239 residues: LexA repressor (239 aa).

Positions 26–46 (FDEMKDALDLKSKSGIHRLIT) form a DNA-binding region, H-T-H motif. Residues serine 160 and lysine 198 each act as for autocatalytic cleavage activity in the active site.

Belongs to the peptidase S24 family. Homodimer.

It carries out the reaction Hydrolysis of Ala-|-Gly bond in repressor LexA.. Functionally, represses a number of genes involved in the response to DNA damage (SOS response), including recA and lexA. In the presence of single-stranded DNA, RecA interacts with LexA causing an autocatalytic cleavage which disrupts the DNA-binding part of LexA, leading to derepression of the SOS regulon and eventually DNA repair. The chain is LexA repressor from Methylobacterium sp. (strain 4-46).